Here is a 1331-residue protein sequence, read N- to C-terminus: MLNLIKNVIRSLKSAKIALIALTFLIFVAVGGFVLLNNTVNNFNAAFNYVTHTGKLSNAIINERYDFGKLEFQEQTNNSQNSSDSFTLTLTNDSRTSFINNALRTNPSLYEGLVTQTFSYQNKTEMTEKTNIVNQSKIIAANNLNNALSKDKQLLVSGQLEKLNAVFREYKAINITDKSVFKKLIVSEPNDLVNSLVIFDGQNLSSSKQSDFNNFLNQFNEIKSKGKDNLSTTLKTGQYQAFLQTLFDYAQASETTLKDQLQKLISNPDSSETNQVKNLFDTPSTLTNIGGQLTLQWTENSLTKQIVIFDPSSYETIVAPGNWTYQQQLGKEVYPDINNWESIKKLPLEQFESEFLKIDQKYKISIDNIDYLVIGVGISPDFVYPVFSASLIVPNIENEQLYYVNQTGYERTFSSFLTNPVETAIVARLINLESDLNTINQWAVENMSWPTNIKAAYSSSDTTNILNLLAARTVFIPNLINTINLVALFLTIAILTVAIIVSILILISYLKKNTEQIGILKANGLSGKKINLSLLIFGLIPAIVGAISGYSFGIGFQDVAIHLFSNYWFIPTATSSFSVVGLLFFSLFVILIMSSISLLVGSIILKKDVVKILKHDSEFKVSRLGLSSKKLFARFGIMTRFRVALAFNAPWKLVFLTLMSSFTMMILNLSFATKDSFENAQSKTNLTNQNHQYEFELASATTQSGLLKWQLFAELGTTDKRSESSVKLANKRMDISNVDASKDWKNQQVINFLSDASGFSNDLNYLENIVQSKIGLDYSLGFNNIVSNPWRLSETLMPTNQASASNTAFQNFLKAIITINPSQGSQFIKQTQDPLTKRFIYAIDSDKALKNNNEQNGSQNHLTLNDDFAKFLYSQFELIKKSGNASNEDLNAIDFENPQTIRDFYNKYNALPPLDYKLSFNVIGLPKETIAGQIDTPKYGFLTLHGEYQNTPIKIKGIKDWKDKVDNLGPVLSDQNNHIINQELFKNYSFDPLIVNNSAAKKYQLAIGSEINIAVNNSFKRIDNKIINQDPLVNATFRVVGINNSAHDPEFFTSYSTAFKVLEYPNEWFVKKLPFNSFYANSLLSFVQSTSLFSESGIFPATSSFSTNNTVLVELIKKTINYKNGQMNQTSSNDSSKKENYQKLQKALGISTDLEISKVNEYVAILARVYNGLPYNSTISFISNVAANNALFGNIANTTKQIQAVVIAVIIPIIMLIILLVSTTLIQELKKIAIRLKALGYSNLKILASFLSIYIPLFAFGLLISIPFSIYLIALHNEVIFASSSIFLDAFLSFESAIGSMLVLLAVLSITFVLNWLELNKIKIDKEIKNS.

A run of 8 helical transmembrane segments spans residues 373–393 (VIGV…SLIV), 487–507 (ALFL…LILI), 534–554 (LLIF…SFGI), 579–599 (VVGL…ISLL), 653–673 (LVFL…SFAT), 1206–1226 (VIAV…TTLI), 1255–1275 (IPLF…LIAL), and 1297–1317 (AIGS…LNWL).

The protein belongs to the ABC-4 integral membrane protein family.

It is found in the cell membrane. This is an uncharacterized protein from Mycoplasma genitalium (strain ATCC 33530 / DSM 19775 / NCTC 10195 / G37) (Mycoplasmoides genitalium).